Here is a 573-residue protein sequence, read N- to C-terminus: Isocitrate dehydrogenase kinase/phosphatase (573 aa).

ATP is bound by residues alanine 317–methionine 323 and lysine 338. Aspartate 373 is an active-site residue.

The protein belongs to the AceK family.

Its subcellular location is the cytoplasm. It catalyses the reaction L-seryl-[isocitrate dehydrogenase] + ATP = O-phospho-L-seryl-[isocitrate dehydrogenase] + ADP + H(+). Its function is as follows. Bifunctional enzyme which can phosphorylate or dephosphorylate isocitrate dehydrogenase (IDH) on a specific serine residue. This is a regulatory mechanism which enables bacteria to bypass the Krebs cycle via the glyoxylate shunt in response to the source of carbon. When bacteria are grown on glucose, IDH is fully active and unphosphorylated, but when grown on acetate or ethanol, the activity of IDH declines drastically concomitant with its phosphorylation. The sequence is that of Isocitrate dehydrogenase kinase/phosphatase from Pseudomonas fluorescens (strain Pf0-1).